The chain runs to 715 residues: Staphylocoagulase (715 aa).

The first 26 residues, 1 to 26, serve as a signal peptide directing secretion; sequence MKKQIISLGALAVASSLFTWDNKADA. Basic and acidic residues predominate over residues 306–327; sequence KYGESETKSPVVKEENKVEDPQ. 2 disordered regions span residues 306–348 and 430–470; these read KYGE…EETT and QGTE…FNKT. Residues 431 to 443 show a composition bias toward polar residues; sequence GTESTLKGIQGES. Tandem repeats lie at residues 495–521, 522–548, 549–575, 576–602, 603–629, 630–656, 657–683, and 684–710. Residues 495–710 form an 8 X 27 AA tandem repeats of A-R-P-[RT]-[FQY]-[NK]-K-[PA]-S-[EK]-T-N-A-Y-N-V-T-T-[NH]-[QAG]-[DN]-G-[TQ]-[VA]-[ST]-Y-G region; sequence ARPRFNKPSE…THADGTATYG (216 aa). The interval 674-697 is disordered; the sequence is THGNGQVSYGARPTYNKPSKTNAY.

This sequence belongs to the staphylocoagulase family.

Staphylocoagulase is an extracellular protein which specifically forms a complex with human prothrombin. This complex named staphylothrombin can clot fibrinogen without any proteolytic cleavage of prothrombin. The sequence is that of Staphylocoagulase from Staphylococcus aureus.